The chain runs to 721 residues: Catalase-peroxidase 1 (721 aa).

Positions tryptophan 98 to tyrosine 223 form a cross-link, tryptophyl-tyrosyl-methioninium (Trp-Tyr) (with M-249). Histidine 99 serves as the catalytic Proton acceptor. Residues tyrosine 223 to methionine 249 constitute a cross-link (tryptophyl-tyrosyl-methioninium (Tyr-Met) (with W-98)). A heme b-binding site is contributed by histidine 264.

Belongs to the peroxidase family. Peroxidase/catalase subfamily. As to quaternary structure, homodimer or homotetramer. Heme b is required as a cofactor. Formation of the three residue Trp-Tyr-Met cross-link is important for the catalase, but not the peroxidase activity of the enzyme.

It catalyses the reaction H2O2 + AH2 = A + 2 H2O. The enzyme catalyses 2 H2O2 = O2 + 2 H2O. In terms of biological role, bifunctional enzyme with both catalase and broad-spectrum peroxidase activity. The polypeptide is Catalase-peroxidase 1 (Legionella pneumophila (strain Corby)).